Here is a 323-residue protein sequence, read N- to C-terminus: Ribonuclease Z (323 aa).

Zn(2+) contacts are provided by H62, H64, D66, H67, H144, D215, and H273. Catalysis depends on D66, which acts as the Proton acceptor.

This sequence belongs to the RNase Z family. In terms of assembly, homodimer. It depends on Zn(2+) as a cofactor.

The enzyme catalyses Endonucleolytic cleavage of RNA, removing extra 3' nucleotides from tRNA precursor, generating 3' termini of tRNAs. A 3'-hydroxy group is left at the tRNA terminus and a 5'-phosphoryl group is left at the trailer molecule.. In terms of biological role, zinc phosphodiesterase, which displays some tRNA 3'-processing endonuclease activity. Probably involved in tRNA maturation, by removing a 3'-trailer from precursor tRNA. In Synechococcus sp. (strain WH7803), this protein is Ribonuclease Z.